The chain runs to 103 residues: Ig lambda chain C region (103 aa).

The 94-residue stretch at 6–99 (PTITLFPPSK…NGTSITKTLK (94 aa)) folds into the Ig-like domain. Residues cysteine 28 and cysteine 85 are joined by a disulfide bond.

This is Ig lambda chain C region from Gallus gallus (Chicken).